The primary structure comprises 86 residues: Putative membrane protein insertion efficiency factor (86 aa).

It belongs to the UPF0161 family.

The protein resides in the cell inner membrane. Could be involved in insertion of integral membrane proteins into the membrane. The protein is Putative membrane protein insertion efficiency factor of Pseudomonas aeruginosa (strain LESB58).